We begin with the raw amino-acid sequence, 87 residues long: Histone H1.C6/H1.C9 (87 aa).

A disordered region spans residues 1–87 (MSDAAVPPKK…KKAVKKAPKK (87 aa)). Positions 11-87 (ASPKKASPKK…KKAVKKAPKK (77 aa)) are enriched in basic residues.

It is found in the nucleus. It localises to the chromosome. The chain is Histone H1.C6/H1.C9 from Trypanosoma cruzi.